The following is an 89-amino-acid chain: Small ribosomal subunit protein uS15 (89 aa).

This sequence belongs to the universal ribosomal protein uS15 family. In terms of assembly, part of the 30S ribosomal subunit. Forms a bridge to the 50S subunit in the 70S ribosome, contacting the 23S rRNA.

In terms of biological role, one of the primary rRNA binding proteins, it binds directly to 16S rRNA where it helps nucleate assembly of the platform of the 30S subunit by binding and bridging several RNA helices of the 16S rRNA. Functionally, forms an intersubunit bridge (bridge B4) with the 23S rRNA of the 50S subunit in the ribosome. The sequence is that of Small ribosomal subunit protein uS15 from Chlorobium phaeovibrioides (strain DSM 265 / 1930) (Prosthecochloris vibrioformis (strain DSM 265)).